Consider the following 297-residue polypeptide: CASP-like protein 4A2 (297 aa).

The tract at residues 1-136 (MKMKRTVSSN…MNGEESATTA (136 aa)) is disordered. Topologically, residues 1–149 (MKMKRTVSSN…ARRDDLVSVT (149 aa)) are cytoplasmic. A compositionally biased stretch (low complexity) spans 8–19 (SSNSEAYSYNES). Pro residues predominate over residues 69–83 (LPSPIPPPPPQIPPP). Polar residues predominate over residues 93–121 (MNSSLDKSPSSMVVQNSWVREDGQQNTTR). A helical transmembrane segment spans residues 150–170 (ALGFRITEVILCVISFSIMAA). The Extracellular segment spans residues 171–189 (DKTQGWSGDSYDRYKEYRY). A helical membrane pass occupies residues 190–210 (CLAVNVIAFVYSAFEACDAAC). Topologically, residues 211–225 (YMAKESYMMNCGFHD) are cytoplasmic. The helical transmembrane segment at 226–246 (LFVFSMDQLLAYLLMSASSCA) threads the bilayer. Residues 247–265 (ATRVDDWVSNWGKDEFTQM) lie on the Extracellular side of the membrane. A helical transmembrane segment spans residues 266–286 (ATASIAVSFLAFGAFAVSALI). Over 287-297 (SSYRLFTHASS) the chain is Cytoplasmic.

The protein belongs to the Casparian strip membrane proteins (CASP) family. Homodimer and heterodimers.

The protein resides in the cell membrane. This Arabidopsis lyrata subsp. lyrata (Lyre-leaved rock-cress) protein is CASP-like protein 4A2.